A 404-amino-acid chain; its full sequence is 1-deoxy-D-xylulose 5-phosphate reductoisomerase (404 aa).

NADPH contacts are provided by Thr10, Gly11, Ser12, Ile13, Gly36, Arg37, Asn38, and Asn124. Residue Lys125 coordinates 1-deoxy-D-xylulose 5-phosphate. Glu126 serves as a coordination point for NADPH. Asp150 contacts Mn(2+). 1-deoxy-D-xylulose 5-phosphate-binding residues include Ser151, Glu152, Ser186, and His209. Glu152 contributes to the Mn(2+) binding site. Gly215 contacts NADPH. Positions 222, 227, 228, and 231 each coordinate 1-deoxy-D-xylulose 5-phosphate. Mn(2+) is bound at residue Glu231.

Belongs to the DXR family. In terms of assembly, homodimer. Mg(2+) is required as a cofactor. It depends on Mn(2+) as a cofactor.

The catalysed reaction is 2-C-methyl-D-erythritol 4-phosphate + NADP(+) = 1-deoxy-D-xylulose 5-phosphate + NADPH + H(+). It participates in isoprenoid biosynthesis; isopentenyl diphosphate biosynthesis via DXP pathway; isopentenyl diphosphate from 1-deoxy-D-xylulose 5-phosphate: step 1/6. Functionally, catalyzes the NADPH-dependent rearrangement and reduction of 1-deoxy-D-xylulose-5-phosphate (DXP) to 2-C-methyl-D-erythritol 4-phosphate (MEP). This Erwinia tasmaniensis (strain DSM 17950 / CFBP 7177 / CIP 109463 / NCPPB 4357 / Et1/99) protein is 1-deoxy-D-xylulose 5-phosphate reductoisomerase.